Reading from the N-terminus, the 713-residue chain is Low-density lipoprotein receptor-related protein 10 (713 aa).

The signal sequence occupies residues 1–17; that stretch reads MLSALPLLFLLLGGALA. Topologically, residues 18–441 are extracellular; that stretch reads RPDRITFPRS…WDCSYALPRK (424 aa). Intrachain disulfides connect Cys-29-Cys-58 and Cys-81-Cys-99. A CUB 1 domain is found at 29 to 137; the sequence is CEAPPAVLSE…QGFLLTYSQD (109 aa). A glycan (N-linked (GlcNAc...) asparagine) is linked at Asn-57. N-linked (GlcNAc...) asparagine glycosylation is present at Asn-112. The LDL-receptor class A 1 domain occupies 140–176; the sequence is LCLQEEFQCLNHRCIPAAQRCDGIDACGDGSDEAGCS. 4 disulfide bridges follow: Cys-141/Cys-153, Cys-148/Cys-166, Cys-160/Cys-175, and Cys-193/Cys-221. The CUB 2 domain occupies 193-306; the sequence is CNLTLEDFYG…RGFNATYHVR (114 aa). N-linked (GlcNAc...) asparagine glycosylation is found at Asn-194 and Asn-300. 3 consecutive LDL-receptor class A domains span residues 308-355, 356-398, and 399-435; these read YCLP…EGCP, GCPP…RRCR, and HCQP…WDCS. Intrachain disulfides connect Cys-309–Cys-332, Cys-316–Cys-345, Cys-339–Cys-354, Cys-357–Cys-375, Cys-364–Cys-388, Cys-382–Cys-397, Cys-400–Cys-412, Cys-407–Cys-425, and Cys-419–Cys-434. The helical transmembrane segment at 442-462 threads the bilayer; the sequence is VITAAVIGSLVCGLLLVIALG. Over 463–713 the chain is Cytoplasmic; the sequence is CTCKLYAIRT…VEAEDEPLLA (251 aa). The disordered stretch occupies residues 566-636; the sequence is LLPRTNTPAR…TLPALATVSE (71 aa). Thr-596 carries the post-translational modification Phosphothreonine. A compositionally biased stretch (pro residues) spans 614 to 626; it reads PPLPIKTPIPTPS.

It belongs to the LDLR family. Highly expressed in heart, lung, liver and liver. Expressed at low level in brain and spleen. Weakly or not expressed in testis and skeletal muscle. In liver, it is expressed in hepatocytes and at higher level in sinusoidal lining. In the kidney, it is expressed in peritubular capillaries. In brain, it is expressed in the epithelium of the choroid plexus ependymal cells of the third ventricle pia matter, and to lesser extent in hippocampal fields CA2 and CA3.

The protein localises to the membrane. The protein resides in the coated pit. Functionally, probable receptor, which is involved in the internalization of lipophilic molecules and/or signal transduction. May be involved in the uptake of lipoprotein APOE in liver. The sequence is that of Low-density lipoprotein receptor-related protein 10 (Lrp10) from Mus musculus (Mouse).